A 206-amino-acid polypeptide reads, in one-letter code: N-(5'-phosphoribosyl)anthranilate isomerase (206 aa).

This sequence belongs to the TrpF family.

The enzyme catalyses N-(5-phospho-beta-D-ribosyl)anthranilate = 1-(2-carboxyphenylamino)-1-deoxy-D-ribulose 5-phosphate. It functions in the pathway amino-acid biosynthesis; L-tryptophan biosynthesis; L-tryptophan from chorismate: step 3/5. The protein is N-(5'-phosphoribosyl)anthranilate isomerase of Citrifermentans bemidjiense (strain ATCC BAA-1014 / DSM 16622 / JCM 12645 / Bem) (Geobacter bemidjiensis).